Reading from the N-terminus, the 244-residue chain is Transmembrane protein 176A (244 aa).

Position 42 is a phosphoserine (Ser42). The next 4 membrane-spanning stretches (helical) occupy residues 60–80 (VLVA…VLGG), 92–112 (SEGA…VAFL), 122–142 (ALMR…AIVI), and 204–224 (LLGI…VYIW).

It belongs to the TMEM176 family. As to quaternary structure, interacts with MCOLN2. As to expression, specifically expressed in lung, kidney and spleen.

Its subcellular location is the membrane. The protein is Transmembrane protein 176A (Tmem176a) of Mus musculus (Mouse).